The primary structure comprises 207 residues: 3,4-dihydroxy-2-butanone 4-phosphate synthase (207 aa).

Residues Arg28–Glu29, Asp33, Arg140–Thr144, and Glu164 each bind D-ribulose 5-phosphate. Glu29 provides a ligand contact to Mg(2+). Mg(2+) is bound at residue His143.

This sequence belongs to the DHBP synthase family. As to quaternary structure, homodimer. Requires Mg(2+) as cofactor. The cofactor is Mn(2+).

The catalysed reaction is D-ribulose 5-phosphate = (2S)-2-hydroxy-3-oxobutyl phosphate + formate + H(+). The protein operates within cofactor biosynthesis; riboflavin biosynthesis; 2-hydroxy-3-oxobutyl phosphate from D-ribulose 5-phosphate: step 1/1. Functionally, catalyzes the conversion of D-ribulose 5-phosphate to formate and 3,4-dihydroxy-2-butanone 4-phosphate. In Oceanobacillus iheyensis (strain DSM 14371 / CIP 107618 / JCM 11309 / KCTC 3954 / HTE831), this protein is 3,4-dihydroxy-2-butanone 4-phosphate synthase.